Here is a 509-residue protein sequence, read N- to C-terminus: DAP3-binding cell death enhancer 1 (509 aa).

The N-terminal 23 residues, 1–23 (MWRLTGILGRALPRLLGPGFRGI), are a transit peptide targeting the mitochondrion. 2 disordered regions span residues 19-60 (GFRG…RNRD) and 143-185 (VLPS…PGLL). Residues 24–101 (TPKPTSSDGP…AVLALHLARQ (78 aa)) constitute a propeptide, extended MTS. Over residues 26-40 (KPTSSDGPQTTSTTL) the composition is skewed to polar residues. Composition is skewed to basic and acidic residues over residues 46 to 60 (NFDR…RNRD) and 156 to 168 (GLRE…EEPA). TPR repeat units follow at residues 213 to 245 (AGPP…QLSV), 246 to 278 (AIAF…RGYS), 279 to 313 (KAQY…VQGH), 314 to 351 (SLAQ…DSGL), 352 to 385 (TEAQ…SNGD), 386 to 423 (SQSR…GNEP), and 470 to 498 (ASST…AMPS). The SIFI-degron motif lies at 307-326 (LAAVQGHSLAQYRYARCLLQ).

It belongs to the DELE1 family. As to quaternary structure, interacts with DAP3. Interacts (via TPR repeats) with EIF2AK1/HRI; activating the protein kinase activity of EIF2AK1/HRI, thereby promoting the integrated stress response (ISR). In terms of assembly, homooctamer; oligomerization is required to activate EIF2AK1/HRI. Interacts (via TPR repeats) with EIF2AK1/HRI; activating the protein kinase activity of EIF2AK1/HRI, thereby promoting the integrated stress response (ISR). Post-translationally, unstable protein in absence of stress: imported in the mitochondrial matrix following processing by the mitochondrial-processing peptidase (MPP), where it is degraded by LONP1. Stabilized in response to iron deficiency: iron deficiency impairs mitochondrial import, promoting localization at the mitochondrial surface and stabilization. Cleaved by OMA1 in response to mitochondrial stress, generating the DAP3-binding cell death enhancer 1 short form (DELE1(S) or S-DELE1) that accumulates in the cytosol and activates the protein kinase activity of EIF2AK1/HRI. Protein cleavage by OMA1 can take place at different positions, and apparently does not require a specific sequence motif. Ubiquitinated and degraded by the SIFI complex once the mitochondrial stress has been resolved, thereby providing stress response silencing. Within the SIFI complex, UBR4 initiates ubiquitin chain that are further elongated or branched by KCMF1.

It localises to the mitochondrion. Its subcellular location is the mitochondrion outer membrane. The protein localises to the mitochondrion inner membrane. The protein resides in the cytoplasm. It is found in the cytosol. In terms of biological role, protein kinase activator that acts as a key activator of the integrated stress response (ISR) following various stresses, such as iron deficiency, mitochondrial stress or mitochondrial DNA breaks. Detects impaired protein import and processing in mitochondria, activating the ISR. May also required for the induction of death receptor-mediated apoptosis through the regulation of caspase activation. Protein kinase activator that activates the ISR in response to iron deficiency: iron deficiency impairs mitochondrial import, promoting DELE1 localization at the mitochondrial surface, where it binds and activates EIF2AK1/HRI to trigger the ISR. Functionally, protein kinase activator generated by protein cleavage in response to mitochondrial stress, which accumulates in the cytosol and specifically binds to and activates the protein kinase activity of EIF2AK1/HRI. It thereby activates the integrated stress response (ISR): EIF2AK1/HRI activation promotes eIF-2-alpha (EIF2S1) phosphorylation, leading to a decrease in global protein synthesis and the induction of selected genes, including the transcription factor ATF4, the master transcriptional regulator of the ISR. Also acts as an activator of PRKN-independent mitophagy: activates the protein kinase activity of EIF2AK1/HRI in response to mitochondrial damage, promoting eIF-2-alpha (EIF2S1) phosphorylation, leading to mitochondrial localization of EIF2S1 followed by induction of mitophagy. The sequence is that of DAP3-binding cell death enhancer 1 from Rattus norvegicus (Rat).